The sequence spans 287 residues: NAD-dependent protein deacylase sir-2.3 (287 aa).

In terms of domain architecture, Deacetylase sirtuin-type spans 10–287 (TELCENSLKK…YRISDVLKEM (278 aa)). NAD(+) contacts are provided by residues 35–55 (GAGISTESGIPDYRSKDVGLY) and 116–119 (QNVD). The Proton acceptor role is filled by H134. The Zn(2+) site is built by C142, C145, C196, and C199. NAD(+) is bound by residues 236–238 (GTS), 262–264 (NIG), and I280.

The protein belongs to the sirtuin family. Class II subfamily. As to quaternary structure, interacts with pyc-1, pcca-1 and mccc-1. Requires Zn(2+) as cofactor. In terms of tissue distribution, ubiquitously expressed with high expression in the pharynx, body wall muscles and gonad. Strong expression in a subset of non-neuronal cells in the head.

It is found in the mitochondrion matrix. The protein localises to the mitochondrion. It catalyses the reaction N(6)-acetyl-L-lysyl-[protein] + NAD(+) + H2O = 2''-O-acetyl-ADP-D-ribose + nicotinamide + L-lysyl-[protein]. Functionally, NAD-dependent protein deacylase. Catalyzes the NAD-dependent hydrolysis of acyl groups from lysine residues. Plays a role in oxidative stress resistance. Might promote neuronal cell death under ischemic conditions and cell death in touch neurons induced by mec-4 channel hyperactivation, possibly downstream of the insulin-like receptor daf-2. Might attenuate the reactive oxygen species (ROS) scavenging system, that eliminates ROS in ischemic conditions, under dietary deprivation and when glycolysis is blocked. The protein is NAD-dependent protein deacylase sir-2.3 (sir-2.3) of Caenorhabditis elegans.